The sequence spans 134 residues: Phosphoribosyl-AMP cyclohydrolase (134 aa).

Asp93 is a binding site for Mg(2+). Cys94 serves as a coordination point for Zn(2+). Positions 95 and 97 each coordinate Mg(2+). Residues Cys112 and Cys119 each coordinate Zn(2+).

This sequence belongs to the PRA-CH family. As to quaternary structure, homodimer. Mg(2+) serves as cofactor. It depends on Zn(2+) as a cofactor.

It is found in the cytoplasm. It carries out the reaction 1-(5-phospho-beta-D-ribosyl)-5'-AMP + H2O = 1-(5-phospho-beta-D-ribosyl)-5-[(5-phospho-beta-D-ribosylamino)methylideneamino]imidazole-4-carboxamide. The protein operates within amino-acid biosynthesis; L-histidine biosynthesis; L-histidine from 5-phospho-alpha-D-ribose 1-diphosphate: step 3/9. Catalyzes the hydrolysis of the adenine ring of phosphoribosyl-AMP. The polypeptide is Phosphoribosyl-AMP cyclohydrolase (Caulobacter sp. (strain K31)).